Here is a 235-residue protein sequence, read N- to C-terminus: High mobility group protein 1.2 (235 aa).

The segment covering 1–34 has biased composition (polar residues); sequence MNSGYSANIFPSSSSPTLYQSHQLQPNPSATMYQ. The interval 1–47 is disordered; the sequence is MNSGYSANIFPSSSSPTLYQSHQLQPNPSATMYQATPRDMGKPPVRG. 2 DNA-binding regions (HMG box) span residues 47 to 117 and 135 to 203; these read GKTS…AAYG and PKRA…RNYK.

Belongs to the HMGB family.

The protein resides in the nucleus. The protein is High mobility group protein 1.2 (hmg-1.2) of Caenorhabditis elegans.